The sequence spans 436 residues: UDP-N-acetylmuramate--L-alanine ligase (436 aa).

108 to 114 is an ATP binding site; the sequence is GAHGKTS.

It belongs to the MurCDEF family.

The protein resides in the cytoplasm. The catalysed reaction is UDP-N-acetyl-alpha-D-muramate + L-alanine + ATP = UDP-N-acetyl-alpha-D-muramoyl-L-alanine + ADP + phosphate + H(+). The protein operates within cell wall biogenesis; peptidoglycan biosynthesis. Cell wall formation. This chain is UDP-N-acetylmuramate--L-alanine ligase, found in Bacillus cereus (strain AH187).